The chain runs to 121 residues: Large ribosomal subunit protein uL22 (121 aa).

This sequence belongs to the universal ribosomal protein uL22 family. Part of the 50S ribosomal subunit.

Its function is as follows. This protein binds specifically to 23S rRNA; its binding is stimulated by other ribosomal proteins, e.g. L4, L17, and L20. It is important during the early stages of 50S assembly. It makes multiple contacts with different domains of the 23S rRNA in the assembled 50S subunit and ribosome. The globular domain of the protein is located near the polypeptide exit tunnel on the outside of the subunit, while an extended beta-hairpin is found that lines the wall of the exit tunnel in the center of the 70S ribosome. This Micrococcus luteus (strain ATCC 4698 / DSM 20030 / JCM 1464 / CCM 169 / CCUG 5858 / IAM 1056 / NBRC 3333 / NCIMB 9278 / NCTC 2665 / VKM Ac-2230) (Micrococcus lysodeikticus) protein is Large ribosomal subunit protein uL22.